Reading from the N-terminus, the 312-residue chain is tRNA uridine(34) hydroxylase (312 aa).

In terms of domain architecture, Rhodanese spans 130–225; that stretch reads RGDEVVFFDG…YGEKFGNQGL (96 aa). Cys185 functions as the Cysteine persulfide intermediate in the catalytic mechanism.

Belongs to the TrhO family.

It catalyses the reaction uridine(34) in tRNA + AH2 + O2 = 5-hydroxyuridine(34) in tRNA + A + H2O. Functionally, catalyzes oxygen-dependent 5-hydroxyuridine (ho5U) modification at position 34 in tRNAs. The chain is tRNA uridine(34) hydroxylase from Corynebacterium efficiens (strain DSM 44549 / YS-314 / AJ 12310 / JCM 11189 / NBRC 100395).